We begin with the raw amino-acid sequence, 628 residues long: Set1/Ash2 histone methyltransferase complex subunit ASH2 (628 aa).

Residue methionine 1 is modified to N-acetylmethionine. Positions 1–18 (MAAAGAGPGQEAGAGPGP) are enriched in gly residues. The PHD-type; atypical zinc finger occupies 1 to 66 (MAAAGAGPGQ…SGEAEGGEAN (66 aa)). Positions 1–107 (MAAAGAGPGQ…QAGSVDEENG (107 aa)) are disordered. The span at 36–65 (AAGAAAPPGEGISAAPTVEPSSGEAEGGEA) shows a compositional bias: low complexity. A DNA-binding region spans residues 67–177 (LVDVSGGLET…MCLSALANLT (111 aa)). Serine 101 is subject to Phosphoserine. Residues 117 to 150 (CGICTKWFTADTFGIDTSSCLPFMTNYSFHCNVC) form a C4-type zinc finger. The segment covering 235–252 (LVKEHPDPGSKDPEEDYP) has biased composition (basic and acidic residues). A disordered region spans residues 235–331 (LVKEHPDPGS…AQRLPPHGYP (97 aa)). A compositionally biased stretch (polar residues) spans 270–282 (NQKQSSAVSTSGN). Gly residues predominate over residues 283–295 (LNGGIAAGSSGKG). Asymmetric dimethylarginine; by PRMT1 and PRMT5 is present on arginine 296. Serine 316 is modified (phosphoserine). An interaction with RBBP5 region spans residues 316–628 (SDPLFSAQRL…DGRRSPPWEP (313 aa)). Positions 360–583 (LDCWAGKPIP…VSINFGPCFK (224 aa)) constitute a B30.2/SPRY domain.

As to quaternary structure, interacts with HCFC1. Core component of several methyltransferase-containing complexes including MLL1/MLL, MLL2/3 (also named ASCOM complex) and MLL4/WBP7. Each complex is at least composed of ASH2L, RBBP5, WDR5, DPY30, one or more specific histone methyltransferases (KMT2A/MLL1, KMT2D/MLL2, KMT2C/MLL3 and KMT2B/MLL4), and the facultative components PAGR1, BACC1, CHD8, E2F6, HCFC1, HCFC2, HSP70, INO80C, KDM6A, KANSL1, LAS1L, MAX, MCRS1, MEN1, MGA, KAT8/MOF, NCOA6, PAXIP1/PTIP, PELP1, PHF20, PRP31, RING2, RUVB1/TIP49A, RUVB2/TIP49B, SENP3, TAF1, TAF4, TAF6, TAF7, TAF9, TEX10 and alpha- and beta-tubulin. Component of the SET1 complex, at least composed of the catalytic subunit (SETD1A or SETD1B), WDR5, WDR82, RBBP5, ASH2L/ASH2, CXXC1/CFP1, HCFC1 and DPY30. Found in a complex with RBBP5, ASH2L, DPY30, KMT2A, KMT2D and WDR5. Component of a histone methylation complex composed of at least ZNF335, RBBP5, ASH2L and WDR5; the complex may have histone H3-specific methyltransferase activity, however does not have specificity for 'Lys-4' of histone H3. Within the complex, interacts with ZNF335. Interacts with RBBP5. Components of this complex may associate with components of a nuclear receptor-mediated transcription complex to form a complex at least composed of ZNF335, HCFC1, CCAR2, EMSY, MKI67, RBBP5, ASH2L and WDR5. Within this complex also interacts with CCAR2 and EMSY. Interacts with DPY30. Interacts with SETD1A and SETD1B. In terms of processing, both monomethylated and dimethylated on arginine residues in the C-terminus. Arg-296 is the major site. Methylation is not required for nuclear localization, nor for MLL complex integrity or maintenance of global histone H3K4me3 levels. As to expression, ubiquitously expressed. Predominantly expressed in adult heart and testis and fetal lung and liver, with barely detectable expression in adult lung, liver, kidney, prostate, and peripheral leukocytes.

Its subcellular location is the nucleus. Functionally, transcriptional regulator. Component or associated component of some histone methyltransferase complexes which regulates transcription through recruitment of those complexes to gene promoters. Component of the Set1/Ash2 histone methyltransferase (HMT) complex, a complex that specifically methylates 'Lys-4' of histone H3, but not if the neighboring 'Lys-9' residue is already methylated. As part of the MLL1/MLL complex it is involved in methylation and dimethylation at 'Lys-4' of histone H3. May play a role in hematopoiesis. In association with RBBP5 and WDR5, stimulates the histone methyltransferase activities of KMT2A, KMT2B, KMT2C, KMT2D, SETD1A and SETD1B. This chain is Set1/Ash2 histone methyltransferase complex subunit ASH2 (ASH2L), found in Homo sapiens (Human).